A 1096-amino-acid polypeptide reads, in one-letter code: Carbamoyl phosphate synthase large chain (1096 aa).

The interval methionine 1 to glutamate 402 is carboxyphosphate synthetic domain. ATP-binding residues include arginine 129, arginine 169, glycine 175, glycine 176, glutamate 208, isoleucine 210, glutamate 215, glycine 241, valine 242, histidine 243, glutamine 285, and glutamate 299. One can recognise an ATP-grasp 1 domain in the interval lysine 133–isoleucine 328. 3 residues coordinate Mg(2+): glutamine 285, glutamate 299, and asparagine 301. Mn(2+) is bound by residues glutamine 285, glutamate 299, and asparagine 301. An oligomerization domain region spans residues lysine 403 to isoleucine 547. The tract at residues valine 548–phenylalanine 950 is carbamoyl phosphate synthetic domain. In terms of domain architecture, ATP-grasp 2 spans serine 676–valine 870. Residues arginine 712, arginine 754, leucine 756, glutamate 761, glycine 786, isoleucine 787, histidine 788, serine 789, glutamine 829, and glutamate 841 each contribute to the ATP site. Mg(2+) contacts are provided by glutamine 829, glutamate 841, and asparagine 843. Residues glutamine 829, glutamate 841, and asparagine 843 each contribute to the Mn(2+) site. In terms of domain architecture, MGS-like spans glycine 951–arginine 1095. An allosteric domain region spans residues glycine 951 to arginine 1096.

The protein belongs to the CarB family. As to quaternary structure, composed of two chains; the small (or glutamine) chain promotes the hydrolysis of glutamine to ammonia, which is used by the large (or ammonia) chain to synthesize carbamoyl phosphate. Tetramer of heterodimers (alpha,beta)4. The cofactor is Mg(2+). It depends on Mn(2+) as a cofactor.

The catalysed reaction is hydrogencarbonate + L-glutamine + 2 ATP + H2O = carbamoyl phosphate + L-glutamate + 2 ADP + phosphate + 2 H(+). It catalyses the reaction hydrogencarbonate + NH4(+) + 2 ATP = carbamoyl phosphate + 2 ADP + phosphate + 2 H(+). It functions in the pathway amino-acid biosynthesis; L-arginine biosynthesis; carbamoyl phosphate from bicarbonate: step 1/1. Its pathway is pyrimidine metabolism; UMP biosynthesis via de novo pathway; (S)-dihydroorotate from bicarbonate: step 1/3. Functionally, large subunit of the glutamine-dependent carbamoyl phosphate synthetase (CPSase). CPSase catalyzes the formation of carbamoyl phosphate from the ammonia moiety of glutamine, carbonate, and phosphate donated by ATP, constituting the first step of 2 biosynthetic pathways, one leading to arginine and/or urea and the other to pyrimidine nucleotides. The large subunit (synthetase) binds the substrates ammonia (free or transferred from glutamine from the small subunit), hydrogencarbonate and ATP and carries out an ATP-coupled ligase reaction, activating hydrogencarbonate by forming carboxy phosphate which reacts with ammonia to form carbamoyl phosphate. In Clavibacter sepedonicus (Clavibacter michiganensis subsp. sepedonicus), this protein is Carbamoyl phosphate synthase large chain.